Reading from the N-terminus, the 56-residue chain is uncharacterized protein (56 aa).

This is an uncharacterized protein from Acidianus convivator (ABV).